We begin with the raw amino-acid sequence, 345 residues long: Holliday junction branch migration complex subunit RuvB (345 aa).

The interval 3–187 (LDILQNRNNL…FGFTARLDFY (185 aa)) is large ATPase domain (RuvB-L). ATP contacts are provided by residues L26, R27, G68, K71, T72, T73, 134–136 (EDF), R177, Y187, and R224. Mg(2+) is bound at residue T72. A small ATPAse domain (RuvB-S) region spans residues 188–259 (SPEELLQVLI…IALKAMDVYE (72 aa)). The interval 262 to 345 (SLGLDRLDRA…EDLSGFELYL (84 aa)) is head domain (RuvB-H). Residues R317 and R322 each contribute to the DNA site.

It belongs to the RuvB family. In terms of assembly, homohexamer. Forms an RuvA(8)-RuvB(12)-Holliday junction (HJ) complex. HJ DNA is sandwiched between 2 RuvA tetramers; dsDNA enters through RuvA and exits via RuvB. An RuvB hexamer assembles on each DNA strand where it exits the tetramer. Each RuvB hexamer is contacted by two RuvA subunits (via domain III) on 2 adjacent RuvB subunits; this complex drives branch migration. In the full resolvosome a probable DNA-RuvA(4)-RuvB(12)-RuvC(2) complex forms which resolves the HJ.

It is found in the cytoplasm. It carries out the reaction ATP + H2O = ADP + phosphate + H(+). In terms of biological role, the RuvA-RuvB-RuvC complex processes Holliday junction (HJ) DNA during genetic recombination and DNA repair, while the RuvA-RuvB complex plays an important role in the rescue of blocked DNA replication forks via replication fork reversal (RFR). RuvA specifically binds to HJ cruciform DNA, conferring on it an open structure. The RuvB hexamer acts as an ATP-dependent pump, pulling dsDNA into and through the RuvAB complex. RuvB forms 2 homohexamers on either side of HJ DNA bound by 1 or 2 RuvA tetramers; 4 subunits per hexamer contact DNA at a time. Coordinated motions by a converter formed by DNA-disengaged RuvB subunits stimulates ATP hydrolysis and nucleotide exchange. Immobilization of the converter enables RuvB to convert the ATP-contained energy into a lever motion, pulling 2 nucleotides of DNA out of the RuvA tetramer per ATP hydrolyzed, thus driving DNA branch migration. The RuvB motors rotate together with the DNA substrate, which together with the progressing nucleotide cycle form the mechanistic basis for DNA recombination by continuous HJ branch migration. Branch migration allows RuvC to scan DNA until it finds its consensus sequence, where it cleaves and resolves cruciform DNA. In Tropheryma whipplei (strain TW08/27) (Whipple's bacillus), this protein is Holliday junction branch migration complex subunit RuvB.